Reading from the N-terminus, the 439-residue chain is Chromosomal replication initiator protein DnaA (439 aa).

A domain I, interacts with DnaA modulators region spans residues 1 to 72 (MEQFSAFKLL…SKLYDDIRAV (72 aa)). A domain II region spans residues 72–99 (VRFVNEQDFFINLAKLEEDNRETLYQSS). A domain III, AAA+ region region spans residues 100 to 322 (GLSKNFTFKN…GIATKLLFYV (223 aa)). ATP-binding residues include G144, G146, K147, and T148. The tract at residues 323–439 (KTTKQNLINN…LQDIITSLVI (117 aa)) is domain IV, binds dsDNA.

It belongs to the DnaA family. As to quaternary structure, oligomerizes as a right-handed, spiral filament on DNA at oriC.

The protein localises to the cytoplasm. Functionally, plays an essential role in the initiation and regulation of chromosomal replication. ATP-DnaA binds to the origin of replication (oriC) to initiate formation of the DNA replication initiation complex once per cell cycle. Binds the DnaA box (a 9 base pair repeat at the origin) and separates the double-stranded (ds)DNA. Forms a right-handed helical filament on oriC DNA; dsDNA binds to the exterior of the filament while single-stranded (ss)DNA is stabiized in the filament's interior. The ATP-DnaA-oriC complex binds and stabilizes one strand of the AT-rich DNA unwinding element (DUE), permitting loading of DNA polymerase. After initiation quickly degrades to an ADP-DnaA complex that is not apt for DNA replication. Binds acidic phospholipids. This Mycoplasma pneumoniae (strain ATCC 29342 / M129 / Subtype 1) (Mycoplasmoides pneumoniae) protein is Chromosomal replication initiator protein DnaA.